A 1673-amino-acid chain; its full sequence is Protein-methionine sulfoxide oxidase mical3b (1673 aa).

The interval 2–492 (WDGQSEMCQA…RHLIDTGEGP (491 aa)) is monooxygenase domain. Residues C96, 96–124 (CGLR…SRNN), E115, R117, R122, N124, and D396 each bind FAD. The Calponin-homology (CH) domain maps to 512 to 618 (MARYSKLLSW…YLSQLHELLK (107 aa)). A disordered region spans residues 647–714 (SKLGQSLSRK…PKASEGHSKV (68 aa)). A compositionally biased stretch (basic and acidic residues) spans 661-671 (DKKEKEADSVG). Positions 791-853 (DVCYFCGRRV…KHHFSFRLAS (63 aa)) constitute an LIM zinc-binding domain. Residues 882–892 (LSSLGSVGTAT) show a composition bias toward low complexity. 5 disordered regions span residues 882 to 901 (LSSL…SSTH), 918 to 938 (RIEL…LQEV), 951 to 1100 (SLQE…KRSE), 1159 to 1188 (QSAR…TDGD), and 1357 to 1393 (GPDA…RETG). Residues 973–992 (LVWKKGEELHARTNGERKLD) are compositionally biased toward basic and acidic residues. Acidic residues-rich tracts occupy residues 993–1002 (LEEELKEEEG) and 1010–1041 (EGEE…DPDI). Residues 1081-1094 (SDLTPDPSTTPESS) are compositionally biased toward low complexity. The segment covering 1159-1182 (QSARICDSSTQTHSVTDLQETSPL) has biased composition (polar residues). Coiled-coil stretches lie at residues 1475–1531 (EEEL…AVEK) and 1573–1638 (QEKN…VEQR). Residues 1495 to 1661 (KQEELRRLHR…EKEEDSDLEA (167 aa)) form the bMERB domain.

Belongs to the Mical family. Requires FAD as cofactor.

The protein localises to the cytoplasm. It localises to the cytoskeleton. Its subcellular location is the nucleus. The catalysed reaction is L-methionyl-[F-actin] + NADPH + O2 + H(+) = L-methionyl-(R)-S-oxide-[F-actin] + NADP(+) + H2O. Functionally, monooxygenase that promotes depolymerization of F-actin by mediating oxidation of specific methionine residues on actin. Acts by modifying actin subunits through the addition of oxygen to form methionine-sulfoxide, leading to promote actin filament severing and prevent repolymerization. Involved in exocytic vesicles tethering and fusion: the monooxygenase activity is required for this process. The chain is Protein-methionine sulfoxide oxidase mical3b (mical3b) from Danio rerio (Zebrafish).